The primary structure comprises 349 residues: Protein RecA (349 aa).

69 to 76 is a binding site for ATP; sequence GPESSGKT.

It belongs to the RecA family.

The protein resides in the cytoplasm. Can catalyze the hydrolysis of ATP in the presence of single-stranded DNA, the ATP-dependent uptake of single-stranded DNA by duplex DNA, and the ATP-dependent hybridization of homologous single-stranded DNAs. It interacts with LexA causing its activation and leading to its autocatalytic cleavage. This Rippkaea orientalis (strain PCC 8801 / RF-1) (Cyanothece sp. (strain PCC 8801)) protein is Protein RecA.